The sequence spans 212 residues: Pyridoxine/pyridoxamine 5'-phosphate oxidase 1 (212 aa).

Substrate is bound by residues 8-11 (RTDY) and Lys66. FMN-binding positions include 61 to 66 (RIVLLK), 76 to 77 (FT), Lys83, and Gln105. Tyr123, Arg127, and Ser131 together coordinate substrate. FMN contacts are provided by residues 140–141 (QS) and Trp184. Residue 190–192 (RLH) coordinates substrate. Arg194 is an FMN binding site.

This sequence belongs to the pyridoxamine 5'-phosphate oxidase family. Homodimer. FMN serves as cofactor.

The enzyme catalyses pyridoxamine 5'-phosphate + O2 + H2O = pyridoxal 5'-phosphate + H2O2 + NH4(+). It carries out the reaction pyridoxine 5'-phosphate + O2 = pyridoxal 5'-phosphate + H2O2. It participates in cofactor metabolism; pyridoxal 5'-phosphate salvage; pyridoxal 5'-phosphate from pyridoxamine 5'-phosphate: step 1/1. It functions in the pathway cofactor metabolism; pyridoxal 5'-phosphate salvage; pyridoxal 5'-phosphate from pyridoxine 5'-phosphate: step 1/1. Functionally, catalyzes the oxidation of either pyridoxine 5'-phosphate (PNP) or pyridoxamine 5'-phosphate (PMP) into pyridoxal 5'-phosphate (PLP). In Ralstonia nicotianae (strain ATCC BAA-1114 / GMI1000) (Ralstonia solanacearum), this protein is Pyridoxine/pyridoxamine 5'-phosphate oxidase 1.